A 226-amino-acid chain; its full sequence is Sugar fermentation stimulation protein homolog (226 aa).

Belongs to the SfsA family.

The protein is Sugar fermentation stimulation protein homolog of Picrophilus torridus (strain ATCC 700027 / DSM 9790 / JCM 10055 / NBRC 100828 / KAW 2/3).